Here is a 151-residue protein sequence, read N- to C-terminus: Protein SprT-like (151 aa).

A SprT-like domain is found at 6 to 147 (LQRMVENLSE…GHCNGKLRMK (142 aa)). A Zn(2+)-binding site is contributed by histidine 67. Glutamate 68 is a catalytic residue. Residue histidine 71 coordinates Zn(2+).

It belongs to the SprT family. The cofactor is Zn(2+).

The protein resides in the cytoplasm. This is Protein SprT-like from Staphylococcus aureus (strain Mu3 / ATCC 700698).